The following is a 454-amino-acid chain: tRNA-2-methylthio-N(6)-dimethylallyladenosine synthase (454 aa).

Residues Lys11–Glu128 form the MTTase N-terminal domain. [4Fe-4S] cluster-binding residues include Cys20, Cys57, Cys91, Cys165, Cys169, and Cys172. Positions Glu151 to Glu382 constitute a Radical SAM core domain. The TRAM domain maps to Arg385–Gly449.

The protein belongs to the methylthiotransferase family. MiaB subfamily. As to quaternary structure, monomer. It depends on [4Fe-4S] cluster as a cofactor.

It localises to the cytoplasm. It carries out the reaction N(6)-dimethylallyladenosine(37) in tRNA + (sulfur carrier)-SH + AH2 + 2 S-adenosyl-L-methionine = 2-methylsulfanyl-N(6)-dimethylallyladenosine(37) in tRNA + (sulfur carrier)-H + 5'-deoxyadenosine + L-methionine + A + S-adenosyl-L-homocysteine + 2 H(+). In terms of biological role, catalyzes the methylthiolation of N6-(dimethylallyl)adenosine (i(6)A), leading to the formation of 2-methylthio-N6-(dimethylallyl)adenosine (ms(2)i(6)A) at position 37 in tRNAs that read codons beginning with uridine. The protein is tRNA-2-methylthio-N(6)-dimethylallyladenosine synthase of Saccharophagus degradans (strain 2-40 / ATCC 43961 / DSM 17024).